Here is a 393-residue protein sequence, read N- to C-terminus: MATPGEGNQPSDDGAPQPLAQLQKLEPRVVRRRLSQARHRATLVGLFNNLRKAVYSQSDITASKWQVLNRTKIHIQEQEESLDKLLKLKASFNLQDGNPNSLEEVKEEYARMYSENDSVFLNSFLQDSPPEWFPSEAVGPDAEEEGEEEGEEEGEEGEEEEEGDEEGEEEEENGEEREVEEYQEEEEEEEEEEKKVDLSHSSSTLLPDLMEFERYLNFYKQTMDLLTMNSIISAHEVTLPIVSAAISHLWQTLSEEKKARLLQVWEQQHSAFADLTEACLELAGVEGSMKDSGVDSQGASCSLESTPEEILFEDAFDVASFLDKSEAQHMSNISAMFATCNSENPEEKFQLYIQIIEFFKSLGCVNTPLNQEPEPPDDDDAMLLKCLETFDDL.

The span at 1–11 (MATPGEGNQPS) shows a compositional bias: polar residues. A disordered region spans residues 1–25 (MATPGEGNQPSDDGAPQPLAQLQKL). A Nuclear localization signal (NLS) motif is present at residues 28–33 (RVVRRR). Residues 66 to 95 (QVLNRTKIHIQEQEESLDKLLKLKASFNLQ) adopt a coiled-coil conformation. The tract at residues 124–201 (FLQDSPPEWF…EEKKVDLSHS (78 aa)) is disordered. The span at 141–192 (DAEEEGEEEGEEEGEEGEEEEEGDEEGEEEEENGEEREVEEYQEEEEEEEEE) shows a compositional bias: acidic residues. Residues 209–218 (LMEFERYLNF) carry the Nuclear export signal (NES) motif.

In terms of assembly, interacts with XPO1. Interacts with MEIOSIN. In terms of processing, phosphorylated in P19 EC cells. In terms of tissue distribution, expressed exclusively in premeiotic germ cells in both sexes. In females, is expressed in the embryonic ovary. In males, is expressed in pubertal and adult testes, in premeiotic spermatogenic cells. Expressed by some type A and B spermatogonia, preleptotene spermatocytes, and early leptotene spermatocytes (at protein level). Expression begins in late undifferentiated spermatogonia and persists during differentiating spermatogonia (at protein level).

It localises to the cytoplasm. The protein localises to the nucleus. Meiosis-inducer required for the transition into meiosis for both female and male germ cells. In female germ cells, acts downstream of ZGLP1 as a key effector of the meiotic program: required for premeiotic DNA replication and subsequent events in meiotic prophase. During spermatogenesis, next to its role in meiotic initiation, promotes (but is not required for) spermatogonial differentiation. In complex with MEIOSIN, directly activates the transcription of a subset of critical meiotic genes playing a central role in cell-cycle switching from mitosis to meiosis. The chain is Stimulated by retinoic acid gene 8 protein from Mus musculus (Mouse).